We begin with the raw amino-acid sequence, 496 residues long: Solute carrier family 2, facilitated glucose transporter member 3 (496 aa).

The Cytoplasmic portion of the chain corresponds to 1–11; it reads MADKKKITASL. A helical membrane pass occupies residues 12 to 33; sequence IYAVSVAAIGSLQFGYNTGVIN. Over 34–65 the chain is Extracellular; it reads APEKIIQAFYNRTLSQRSGETISPELLTSLWS. Asn44 carries N-linked (GlcNAc...) asparagine glycosylation. Residues 66–86 traverse the membrane as a helical segment; it reads LSVAIFSVGGMIGSFSVSLFF. Residues 87–91 lie on the Cytoplasmic side of the membrane; that stretch reads NRFGR. The chain crosses the membrane as a helical span at residues 92–112; the sequence is RNSMLLVNVLAFAGGALMALS. The Extracellular portion of the chain corresponds to 113-119; the sequence is KIAKAVE. Residues 120 to 143 traverse the membrane as a helical segment; sequence MLIIGRFIIGLFCGLCTGFVPMYI. The Cytoplasmic portion of the chain corresponds to 144–154; that stretch reads SEVSPTSLRGA. Residues 155–175 traverse the membrane as a helical segment; sequence FGTLNQLGIVVGILVAQIFGL. D-glucose is bound at residue Gln160. Residues 176-184 lie on the Extracellular side of the membrane; that stretch reads EGIMGTEAL. The chain crosses the membrane as a helical span at residues 185-205; that stretch reads WPLLLGFTIVPAVLQCVALLF. The Cytoplasmic segment spans residues 206 to 270; it reads CPESPRFLLI…LFRSPNYRQP (65 aa). A helical transmembrane segment spans residues 271 to 291; it reads IIISITLQLSQQLSGINAVFY. The important for selectivity against fructose stretch occupies residues 278-280; the sequence is QLS. Residues 281 to 282 and Asn287 each bind D-glucose; that span reads QQ. The Extracellular segment spans residues 292–305; that stretch reads YSTGIFERAGITQP. The chain crosses the membrane as a helical span at residues 306-326; sequence VYATIGAGVVNTVFTVVSLFL. Asn316 contacts D-glucose. At 327-332 the chain is on the cytoplasmic side; sequence VERAGR. Residues 333–353 form a helical membrane-spanning segment; the sequence is RTLHLVGLGGMAVCAAVMTIA. At 354–362 the chain is on the extracellular side; the sequence is LALKEKWIR. The helical transmembrane segment at 363 to 388 threads the bilayer; sequence YISIVATFGFVALFEIGPGPIPWFIV. Residues Glu377 and Trp385 each coordinate D-glucose. Topologically, residues 389–398 are cytoplasmic; it reads AELFSQGPRP. The chain crosses the membrane as a helical span at residues 399-419; that stretch reads AAMAVAGCSNWTSNFLVGMLF. The Extracellular segment spans residues 420-428; the sequence is PYAEKLCGP. The chain crosses the membrane as a helical span at residues 429–449; it reads YVFLIFLVFLLIFFIFTYFKV. Residues 450–496 lie on the Cytoplasmic side of the membrane; sequence PETKGRTFEDISRGFEEQVETSSPSSPPIEKNPMVEMNSIEPDKEVA. The interval 464–496 is disordered; it reads FEEQVETSSPSSPPIEKNPMVEMNSIEPDKEVA.

This sequence belongs to the major facilitator superfamily. Sugar transporter (TC 2.A.1.1) family. Glucose transporter subfamily.

It localises to the cell membrane. Its subcellular location is the perikaryon. The protein localises to the cell projection. The enzyme catalyses D-glucose(out) = D-glucose(in). It carries out the reaction D-galactose(in) = D-galactose(out). Its activity is regulated as follows. Deoxyglucose transport is inhibited by D-glucose, D-galactose and maltose. Galactose transport is inhibited by D-glucose and maltose. Its function is as follows. Facilitative glucose transporter. Can also mediate the uptake of various other monosaccharides across the cell membrane. Mediates the uptake of glucose, 2-deoxyglucose, galactose, mannose, xylose and fucose, and probably also dehydroascorbate. Does not mediate fructose transport. Required for mesendoderm differentiation. In Gallus gallus (Chicken), this protein is Solute carrier family 2, facilitated glucose transporter member 3.